The sequence spans 410 residues: Multifunctional CCA protein (410 aa).

The ATP site is built by Gly-8 and Arg-11. Gly-8 and Arg-11 together coordinate CTP. Mg(2+) is bound by residues Asp-21 and Asp-23. ATP contacts are provided by Arg-91, Arg-138, and Arg-141. CTP contacts are provided by Arg-91, Arg-138, and Arg-141. One can recognise an HD domain in the interval 229-347; sequence TGIHQEMVSD…AQLALVCEAD (119 aa).

The protein belongs to the tRNA nucleotidyltransferase/poly(A) polymerase family. Bacterial CCA-adding enzyme type 1 subfamily. In terms of assembly, monomer. Can also form homodimers and oligomers. The cofactor is Mg(2+). It depends on Ni(2+) as a cofactor.

It carries out the reaction a tRNA precursor + 2 CTP + ATP = a tRNA with a 3' CCA end + 3 diphosphate. It catalyses the reaction a tRNA with a 3' CCA end + 2 CTP + ATP = a tRNA with a 3' CCACCA end + 3 diphosphate. Its function is as follows. Catalyzes the addition and repair of the essential 3'-terminal CCA sequence in tRNAs without using a nucleic acid template. Adds these three nucleotides in the order of C, C, and A to the tRNA nucleotide-73, using CTP and ATP as substrates and producing inorganic pyrophosphate. tRNA 3'-terminal CCA addition is required both for tRNA processing and repair. Also involved in tRNA surveillance by mediating tandem CCA addition to generate a CCACCA at the 3' terminus of unstable tRNAs. While stable tRNAs receive only 3'-terminal CCA, unstable tRNAs are marked with CCACCA and rapidly degraded. The polypeptide is Multifunctional CCA protein (Xanthomonas euvesicatoria pv. vesicatoria (strain 85-10) (Xanthomonas campestris pv. vesicatoria)).